Consider the following 90-residue polypeptide: Cell division topological specificity factor (90 aa).

The tract at residues 1–21 (MAGFWSKLFSSEEKPSSAQTA) is disordered. Over residues 10 to 21 (SSEEKPSSAQTA) the composition is skewed to basic and acidic residues.

Belongs to the MinE family.

Functionally, prevents the cell division inhibition by proteins MinC and MinD at internal division sites while permitting inhibition at polar sites. This ensures cell division at the proper site by restricting the formation of a division septum at the midpoint of the long axis of the cell. In Acinetobacter baumannii (strain AB307-0294), this protein is Cell division topological specificity factor.